Here is a 453-residue protein sequence, read N- to C-terminus: Ribosomal protein uS12 methylthiotransferase RimO (453 aa).

Positions P5–P120 constitute an MTTase N-terminal domain. C14, C50, C79, C151, C155, and C158 together coordinate [4Fe-4S] cluster. Residues L137–N382 form the Radical SAM core domain. The TRAM domain occupies Q385–V453.

The protein belongs to the methylthiotransferase family. RimO subfamily. The cofactor is [4Fe-4S] cluster.

The protein localises to the cytoplasm. It carries out the reaction L-aspartate(89)-[ribosomal protein uS12]-hydrogen + (sulfur carrier)-SH + AH2 + 2 S-adenosyl-L-methionine = 3-methylsulfanyl-L-aspartate(89)-[ribosomal protein uS12]-hydrogen + (sulfur carrier)-H + 5'-deoxyadenosine + L-methionine + A + S-adenosyl-L-homocysteine + 2 H(+). In terms of biological role, catalyzes the methylthiolation of an aspartic acid residue of ribosomal protein uS12. The polypeptide is Ribosomal protein uS12 methylthiotransferase RimO (Burkholderia cenocepacia (strain HI2424)).